Consider the following 3081-residue polypeptide: Cilia- and flagella-associated protein 54 (3081 aa).

9 disordered regions span residues 542-579 (SGTA…AGGA), 591-626 (TQTA…QSSL), 910-942 (PPQP…GARK), 1406-1451 (ADAP…GITP), 1518-1586 (ESIL…YPVV), 1636-1657 (RRAA…EERP), 2176-2210 (GERT…LPEP), 2229-2306 (MASG…SQRA), and 2776-2806 (ARPV…SGDG). Low complexity predominate over residues 564-579 (GGSASPPNGSSGAGGA). A compositionally biased stretch (pro residues) spans 1428 to 1449 (MPPPVPDPSAAGPPPLTPPEGI). Residues 1538-1550 (GGKDDKKKDDKAP) show a composition bias toward basic and acidic residues. 3 stretches are compositionally biased toward low complexity: residues 1638–1648 (AALAASASTAG), 2181–2199 (APKP…AAAA), and 2240–2269 (EPSS…SPTG). Positions 2289–2301 (PEVPGPPPPPPPS) are enriched in pro residues. Residues 2776–2788 (ARPVATSSSGARP) show a composition bias toward low complexity. The segment covering 2796–2805 (KPGAGGGSGD) has biased composition (gly residues).

The protein belongs to the CFAP54 family. As to quaternary structure, part of the PDCP1 complex composed of CFAP46, CFAP54, CFAP74 and CFAP221; the PDCP1 complex binds calmodulin.

It is found in the cytoplasm. The protein resides in the cytoskeleton. It localises to the cilium axoneme. This Chlamydomonas reinhardtii (Chlamydomonas smithii) protein is Cilia- and flagella-associated protein 54.